The chain runs to 308 residues: Porphobilinogen deaminase (308 aa).

Residue Cys-241 is modified to S-(dipyrrolylmethanemethyl)cysteine.

This sequence belongs to the HMBS family. As to quaternary structure, monomer. Dipyrromethane is required as a cofactor.

It catalyses the reaction 4 porphobilinogen + H2O = hydroxymethylbilane + 4 NH4(+). Its pathway is porphyrin-containing compound metabolism; protoporphyrin-IX biosynthesis; coproporphyrinogen-III from 5-aminolevulinate: step 2/4. Functionally, tetrapolymerization of the monopyrrole PBG into the hydroxymethylbilane pre-uroporphyrinogen in several discrete steps. In Staphylococcus saprophyticus subsp. saprophyticus (strain ATCC 15305 / DSM 20229 / NCIMB 8711 / NCTC 7292 / S-41), this protein is Porphobilinogen deaminase.